The chain runs to 1825 residues: Proteasome activator complex subunit 4B (1825 aa).

HEAT repeat units follow at residues 458 to 502 (PEGP…LVDC), 981 to 1020 (NFCCRDITPRVLEFLEPTRTDVTQQQFKGALYCLLGNHCG), 1162 to 1200 (YPLPAPAVFFFVQSLNHDALVVRKMAIAAVAGILKQLKR), 1336 to 1374 (DAFLPVLKPHMERLANDSHESTQRCVAEIIAGLIRGSKH), 1618 to 1656 (PEQIPMVLAVLHEIAGSSSWHARYSVLTYLQTMVFYNLF), and 1662 to 1700 (EQCVQGVRALVIRLLEDEQLEVREMAATTLSGFLQCNFL). A bromodomain-like (BRDL) region spans residues 1632-1720 (AGSSSWHARY…EALCKTRLPK (89 aa)).

It belongs to the BLM10 family. Homodimer. Interacts with the 20S and 26S proteasomes.

It is found in the cytoplasm. It localises to the cytosol. Its subcellular location is the nucleus. The protein localises to the nucleus speckle. Functionally, associated component of the proteasome that specifically recognizes acetylated histones and promotes ATP- and ubiquitin-independent degradation of core histones during DNA damage response. Recognizes and binds acetylated histones via its bromodomain-like (BRDL) region and activates the proteasome by opening the gated channel for substrate entry. Binds to the core proteasome via its C-terminus, which occupies the same binding sites as the proteasomal ATPases, opening the closed structure of the proteasome via an active gating mechanism. involved in DNA damage response in somatic cells: binds to acetylated histones and promotes degradation of histones. The polypeptide is Proteasome activator complex subunit 4B (psme4b) (Danio rerio (Zebrafish)).